Consider the following 500-residue polypeptide: Cytochrome P450 monooxygenase hepD (500 aa).

A helical transmembrane segment spans residues 15–35 (WILLSLSLAFIVVYSLFYLAV). Asparagine 99, asparagine 185, asparagine 373, and asparagine 409 each carry an N-linked (GlcNAc...) asparagine glycan. Cysteine 445 is a binding site for heme. Asparagine 482 is a glycosylation site (N-linked (GlcNAc...) asparagine).

The protein belongs to the cytochrome P450 family. Requires heme as cofactor.

It is found in the membrane. Its pathway is secondary metabolite biosynthesis. Cytochrome P450 monooxygenase; part of the gene cluster that mediates the biosynthesis of heptelidic acid (HA), a sesquiterpene lactone that acts as an inhibitor of glyceraldehyde-3-phosphatedehydrogenase (GAPDH) and a growth inhibitor of the salt-tolerant lactic acid bacteria in soy sauce brewing. The chain is Cytochrome P450 monooxygenase hepD from Aspergillus oryzae (strain ATCC 42149 / RIB 40) (Yellow koji mold).